The following is a 311-amino-acid chain: Asialoglycoprotein receptor 2 (311 aa).

The tract at residues 1–44 (MAKDFQDIQQLSSEENDHPFHQGEGPGTRRLNPRRGNPFLKGPP) is disordered. Topologically, residues 1–58 (MAKDFQDIQQLSSEENDHPFHQGEGPGTRRLNPRRGNPFLKGPPPAQPLAQRLCSMVC) are cytoplasmic. The Endocytosis signal motif lies at 5–8 (FQDI). Serine 13 bears the Phosphoserine mark. A lipid anchor (S-palmitoyl cysteine) is attached at cysteine 54. The helical; Signal-anchor for type II membrane protein transmembrane segment at 59 to 79 (FSLLALSFNILLLVVICVTGS) threads the bilayer. Residues 80–311 (QSEGHGGAQL…KRRNATGEVA (232 aa)) lie on the Extracellular side of the membrane. N-linked (GlcNAc...) asparagine glycosylation is found at asparagine 102 and asparagine 170. The C-type lectin domain maps to 176 to 302 (CCPVNWVEHQ…LQVYRWVCEK (127 aa)). Cystine bridges form between cysteine 177-cysteine 188, cysteine 205-cysteine 300, and cysteine 278-cysteine 292. N-linked (GlcNAc...) asparagine glycosylation occurs at asparagine 305.

In terms of assembly, the functioning ligand-binding unit of this receptor is thought to be at least a dimer. Interacts with LASS2. As to quaternary structure, (Microbial infection) Interacts with hepatitis E virus capsid protein ORF2. As to expression, expressed exclusively in hepatic parenchymal cells.

It is found in the membrane. In terms of biological role, mediates the endocytosis of plasma glycoproteins to which the terminal sialic acid residue on their complex carbohydrate moieties has been removed. The receptor recognizes terminal galactose and N-acetylgalactosamine units. After ligand binding to the receptor, the resulting complex is internalized and transported to a sorting organelle, where receptor and ligand are disassociated. The receptor then returns to the cell membrane surface. In Homo sapiens (Human), this protein is Asialoglycoprotein receptor 2 (ASGR2).